Here is a 101-residue protein sequence, read N- to C-terminus: Large ribosomal subunit protein uL24 (101 aa).

This sequence belongs to the universal ribosomal protein uL24 family. As to quaternary structure, part of the 50S ribosomal subunit.

In terms of biological role, one of two assembly initiator proteins, it binds directly to the 5'-end of the 23S rRNA, where it nucleates assembly of the 50S subunit. One of the proteins that surrounds the polypeptide exit tunnel on the outside of the subunit. The chain is Large ribosomal subunit protein uL24 from Cereibacter sphaeroides (strain ATCC 17029 / ATH 2.4.9) (Rhodobacter sphaeroides).